The sequence spans 296 residues: D-alanine--D-alanine ligase (296 aa).

Positions 103–293 (KEILMHYRMP…FDSFVKRIIE (191 aa)) constitute an ATP-grasp domain. Residue 129-180 (ISFPVAVKPSSGGSSIATFKVKSIQELKHAYEEASKYGEVMIEQWVTGKEIT) participates in ATP binding. Residues Asp-247, Glu-260, and Asn-262 each coordinate Mg(2+).

Belongs to the D-alanine--D-alanine ligase family. Mg(2+) is required as a cofactor. Requires Mn(2+) as cofactor.

It localises to the cytoplasm. It catalyses the reaction 2 D-alanine + ATP = D-alanyl-D-alanine + ADP + phosphate + H(+). Its pathway is cell wall biogenesis; peptidoglycan biosynthesis. Cell wall formation. This Francisella tularensis subsp. tularensis (strain WY96-3418) protein is D-alanine--D-alanine ligase.